The chain runs to 442 residues: Protein PRRC1-A (442 aa).

The tract at residues 1–27 is disordered; sequence MMEESGIETTPPSTPPPSTIGTSVPAA.

Belongs to the PRRC1 family.

The protein localises to the golgi apparatus. The protein is Protein PRRC1-A (prrc1-a) of Xenopus laevis (African clawed frog).